A 581-amino-acid polypeptide reads, in one-letter code: Kelch-like protein 38 (581 aa).

Positions 34–101 (TDVSICAGAR…VYTGEAHIAT (68 aa)) constitute a BTB domain. Residues 136–237 (CLGMIRLSEI…HPAFFHHFIA (102 aa)) enclose the BACK domain. Kelch repeat units follow at residues 285–332 (FLIL…TLHR), 334–383 (IYVL…AHKN), 384–431 (FIFS…VKDQ), 433–479 (LYLF…VLGE), 480–521 (RIVI…VMGN), and 523–573 (LYVT…TLQC).

This is Kelch-like protein 38 (KLHL38) from Homo sapiens (Human).